We begin with the raw amino-acid sequence, 228 residues long: Cytochrome b6-f complex iron-sulfur subunit 2, chloroplastic (228 aa).

The N-terminal 49 residues, 1–49, are a transit peptide targeting the chloroplast; it reads MASSTLSPVTQLCSSKSGLSSVSQCLLLKPMKINSHGLGKDKRMKVKCM. A helical transmembrane segment spans residues 71–91; that stretch reads LLLGALSLPTAGMLVPYATFF. Positions 115–211 constitute a Rieske domain; it reads ASEWLKTHPP…ADIDDGKVVF (97 aa). 4 residues coordinate [2Fe-2S] cluster: cysteine 157, histidine 159, cysteine 175, and histidine 178. A disulfide bridge connects residues cysteine 162 and cysteine 177.

The protein belongs to the Rieske iron-sulfur protein family. In terms of assembly, the 4 large subunits of the cytochrome b6-f complex are cytochrome b6, subunit IV (17 kDa polypeptide, petD), cytochrome f and the Rieske protein, while the 4 small subunits are petG, petL, petM and petN. The complex functions as a dimer. [2Fe-2S] cluster serves as cofactor.

It is found in the plastid. The protein localises to the chloroplast thylakoid membrane. The enzyme catalyses 2 oxidized [plastocyanin] + a plastoquinol + 2 H(+)(in) = 2 reduced [plastocyanin] + a plastoquinone + 4 H(+)(out). Its function is as follows. Component of the cytochrome b6-f complex, which mediates electron transfer between photosystem II (PSII) and photosystem I (PSI), cyclic electron flow around PSI, and state transitions. This Nicotiana tabacum (Common tobacco) protein is Cytochrome b6-f complex iron-sulfur subunit 2, chloroplastic (petC2).